A 397-amino-acid chain; its full sequence is Succinate--CoA ligase [ADP-forming] subunit beta (397 aa).

In terms of domain architecture, ATP-grasp spans 9 to 254; the sequence is KALLKSFGAP…TTEEDEKEIE (246 aa). ATP-binding positions include K46, 53–55, E109, A112, and E117; that span reads GRG. N209 and D223 together coordinate Mg(2+). Substrate is bound by residues N274 and 331-333; that span reads GIM.

This sequence belongs to the succinate/malate CoA ligase beta subunit family. As to quaternary structure, heterotetramer of two alpha and two beta subunits. Mg(2+) is required as a cofactor.

The catalysed reaction is succinate + ATP + CoA = succinyl-CoA + ADP + phosphate. It catalyses the reaction GTP + succinate + CoA = succinyl-CoA + GDP + phosphate. The protein operates within carbohydrate metabolism; tricarboxylic acid cycle; succinate from succinyl-CoA (ligase route): step 1/1. In terms of biological role, succinyl-CoA synthetase functions in the citric acid cycle (TCA), coupling the hydrolysis of succinyl-CoA to the synthesis of either ATP or GTP and thus represents the only step of substrate-level phosphorylation in the TCA. The beta subunit provides nucleotide specificity of the enzyme and binds the substrate succinate, while the binding sites for coenzyme A and phosphate are found in the alpha subunit. In Mesorhizobium japonicum (strain LMG 29417 / CECT 9101 / MAFF 303099) (Mesorhizobium loti (strain MAFF 303099)), this protein is Succinate--CoA ligase [ADP-forming] subunit beta.